The chain runs to 568 residues: Peroxisomal leader peptide-processing protease (568 aa).

Residues 332–568 (TPRGLPLRDL…PLSEVPRSKL (237 aa)) form a serine protease region. Residues His-374, Asp-410, and Ser-483 each act as charge relay system in the active site.

Belongs to the peptidase S1B family. Homodimer. Forms a heterodimer with the C-terminal cleavage product (49 kDa form). Forms a heterodimer with the N-terminal cleavage product (10 kDa form). Interacts with PEX5. Interacts with LONP2. In terms of processing, self-cleavage gives rise to an N-terminal 10-kDa fragment and C-terminal 49-kDa fragment upon import into the peroxisomes. The full-lengh TYSND1 is the active the proteolytic processing of PTS1- and PTS2-proteins and in self-cleavage, and intermolecular self-cleavage of TYSND1 down-regulates its protease activity.

It is found in the peroxisome. Its activity is regulated as follows. Inhibited by N-ethylmaleimide (NEM). Not affected by leupeptin or trans-epoxysuccinyl-l-leucylamido-(4-gianidino) butane (E64). Peroxisomal protease that mediates both the removal of the leader peptide from proteins containing a PTS2 target sequence and processes several PTS1-containing proteins. Catalyzes the processing of PTS1-proteins involved in the peroxisomal beta-oxidation of fatty acids. This Mus musculus (Mouse) protein is Peroxisomal leader peptide-processing protease (Tysnd1).